The chain runs to 291 residues: Protease HtpX homolog (291 aa).

Helical transmembrane passes span 4 to 24 (VILF…TARI) and 38 to 58 (MGML…ISLL). Residue histidine 144 coordinates Zn(2+). Glutamate 145 is an active-site residue. Residue histidine 148 participates in Zn(2+) binding. Helical transmembrane passes span 159-179 (LIQG…AYAV) and 199-219 (ISSI…VMFF). Residue glutamate 224 participates in Zn(2+) binding.

This sequence belongs to the peptidase M48B family. Zn(2+) is required as a cofactor.

The protein localises to the cell inner membrane. The sequence is that of Protease HtpX homolog from Pelodictyon phaeoclathratiforme (strain DSM 5477 / BU-1).